The primary structure comprises 677 residues: Pannexin-2 (677 aa).

Topologically, residues 11–53 are cytoplasmic; sequence MATALLAGEKLRELILPGSQDDKAGALAALLLQLKLELPFDRV. The chain crosses the membrane as a helical span at residues 54–74; that stretch reads VTIGTVLVPILLVTLVFTKNF. The Extracellular segment spans residues 75–125; that stretch reads AEEPIYCYTPHNFTRDQALYARGYCWTELRDALPGVDASLWPSLFEHKFLP. An N-linked (GlcNAc...) asparagine glycan is attached at asparagine 86. The chain crosses the membrane as a helical span at residues 126–146; the sequence is YALLAFAAIMYVPALGWEFLA. Residues 147–230 lie on the Cytoplasmic side of the membrane; sequence STRLTSELNF…NFLAKLYLAR (84 aa). Residues 231-251 traverse the membrane as a helical segment; that stretch reads HVLILLLSVVPISYLCTYYAT. Topologically, residues 252-295 are extracellular; sequence QKQNEFTCALGASPDGPVGSAGPTVRVSCKLPSVQLQRIIAGVD. A helical transmembrane segment spans residues 296 to 316; sequence IVLLCFMNLIILVNLIHLFIF. Over 317–617 the chain is Cytoplasmic; sequence RKSNFIFDKL…LGKADPLTIL (301 aa). A compositionally biased stretch (polar residues) spans 394-408; the sequence is TTPTVRDSGIQTVDP. Disordered stretches follow at residues 394–425 and 485–512; these read TTPT…PVVK and AHHY…HTRH. 2 positions are modified to phosphoserine: serine 593 and serine 604.

This sequence belongs to the pannexin family. As to quaternary structure, homoheptameric. In terms of processing, S-palmitoylated in neural stem and progenitor cells. Post-translationally, cleaved by CASP3 and CASP7 during apoptosis. Cleavage has no effect on it function. As to expression, expression is enriched in central nervous system. Expressed in suprabasal layers of skin epidermis. More aboundantly expressed in skin.

It is found in the cell membrane. It localises to the golgi apparatus membrane. The protein resides in the endoplasmic reticulum membrane. The catalysed reaction is ATP(in) = ATP(out). It carries out the reaction chloride(in) = chloride(out). It catalyses the reaction iodide(out) = iodide(in). The enzyme catalyses Na(+)(in) = Na(+)(out). The catalysed reaction is D-gluconate(in) = D-gluconate(out). Ion channel with a slight anion preference. Also able to release ATP. Plays a role in regulating neurogenesis and apoptosis in keratinocytes. In Mus musculus (Mouse), this protein is Pannexin-2 (Panx2).